Consider the following 385-residue polypeptide: Heat-inducible transcription repressor HrcA (385 aa).

Belongs to the HrcA family.

Functionally, negative regulator of class I heat shock genes (grpE-dnaK-dnaJ and groELS operons). Prevents heat-shock induction of these operons. The chain is Heat-inducible transcription repressor HrcA from Protochlamydia amoebophila (strain UWE25).